A 481-amino-acid chain; its full sequence is Vanillin dehydrogenase (481 aa).

228-233 (GSTHVG) provides a ligand contact to NAD(+). Catalysis depends on residues glutamate 250 and cysteine 284.

This sequence belongs to the aldehyde dehydrogenase family.

The enzyme catalyses vanillin + NAD(+) + H2O = vanillate + NADH + 2 H(+). Catalyzes the NAD-dependent oxidation of vanillin to vanillic acid. In Pseudomonas sp. (strain HR199 / DSM 7063), this protein is Vanillin dehydrogenase (vdh).